The sequence spans 91 residues: DNA-directed RNA polymerase subunit omega (91 aa).

Belongs to the RNA polymerase subunit omega family. As to quaternary structure, the RNAP catalytic core consists of 2 alpha, 1 beta, 1 beta' and 1 omega subunit. When a sigma factor is associated with the core the holoenzyme is formed, which can initiate transcription.

The catalysed reaction is RNA(n) + a ribonucleoside 5'-triphosphate = RNA(n+1) + diphosphate. Promotes RNA polymerase assembly. Latches the N- and C-terminal regions of the beta' subunit thereby facilitating its interaction with the beta and alpha subunits. The sequence is that of DNA-directed RNA polymerase subunit omega from Erwinia tasmaniensis (strain DSM 17950 / CFBP 7177 / CIP 109463 / NCPPB 4357 / Et1/99).